The chain runs to 223 residues: Large ribosomal subunit protein uL4 (223 aa).

The interval alanine 49–glutamine 106 is disordered.

It belongs to the universal ribosomal protein uL4 family. In terms of assembly, part of the 50S ribosomal subunit.

Functionally, one of the primary rRNA binding proteins, this protein initially binds near the 5'-end of the 23S rRNA. It is important during the early stages of 50S assembly. It makes multiple contacts with different domains of the 23S rRNA in the assembled 50S subunit and ribosome. Forms part of the polypeptide exit tunnel. The protein is Large ribosomal subunit protein uL4 of Mycobacterium bovis (strain ATCC BAA-935 / AF2122/97).